Consider the following 327-residue polypeptide: MCSTSGCDLEEIPLDDDDLNTIEFKILAYYTRHHVFKSTPALFSPKLLRTRSLSQRGLGNCSANESWTEVSWPCRNSQSSEKAINLGKKKSSWKAFFGVVEKEDSQSTPAKVSAQGQRTLEYQDSHSQQWSRCLSNVEQCLEHEAVDPKVISIANRVAEIVYSWPPPQATQAGGFKSKEIFVTEGLSFQLQGHVPVASSSKKDEEEQILAKIVELLKYSGDQLERKLKKDKALMGHFQDGLSYSVFKTITDQVLMGVDPRGESEVKAQGFKAALVIDVTAKLTAIDNHPMNRVLGFGTKYLKENFSPWIQQHGGWEKILGISHEEVD.

At serine 44 the chain carries Phosphoserine. The BH3 signature appears at 212–226; that stretch reads IVELLKYSGDQLERK. The short motif at 308 to 315 is the BH2 element; the sequence is WIQQHGGW.

Belongs to the Bcl-2 family. Phosphorylated by MELK, leading to inhibit its pro-apoptotic function. As to expression, isoform 1 is widely expressed. Isoform 2 is testis-specific.

Its subcellular location is the cytoplasm. It is found in the cytosol. The protein resides in the endomembrane system. Plays a role in apoptosis. In Homo sapiens (Human), this protein is Apoptosis facilitator Bcl-2-like protein 14 (BCL2L14).